The chain runs to 418 residues: F-box/kelch-repeat protein SKIP20 (418 aa).

The region spanning 14–61 (DLIPGLPEELAIECLVRVPFQFHSSIKSVCRSWKCVISSRSFIKERIG) is the F-box domain. The disordered stretch occupies residues 79 to 104 (PSPAMMEGGEMSQKKKEEEEGESQMT). 4 Kelch repeats span residues 104–150 (TQQL…AIQD), 153–206 (KVLL…SVGS), 208–255 (KVYV…SMAT), and 258–314 (GFCV…EFPG).

In terms of assembly, part of a SCF (ASK-cullin-F-box) protein ligase complex. Interacts with SKP1A/ASK1 and SPK1B/ASK2.

It is found in the nucleus. The protein operates within protein modification; protein ubiquitination. Component of SCF(ASK-cullin-F-box) E3 ubiquitin ligase complexes, which may mediate the ubiquitination and subsequent proteasomal degradation of target proteins. The chain is F-box/kelch-repeat protein SKIP20 (SKIP20) from Arabidopsis thaliana (Mouse-ear cress).